A 236-amino-acid polypeptide reads, in one-letter code: Phosphoribosylaminoimidazole-succinocarboxamide synthase (236 aa).

The protein belongs to the SAICAR synthetase family.

It carries out the reaction 5-amino-1-(5-phospho-D-ribosyl)imidazole-4-carboxylate + L-aspartate + ATP = (2S)-2-[5-amino-1-(5-phospho-beta-D-ribosyl)imidazole-4-carboxamido]succinate + ADP + phosphate + 2 H(+). The protein operates within purine metabolism; IMP biosynthesis via de novo pathway; 5-amino-1-(5-phospho-D-ribosyl)imidazole-4-carboxamide from 5-amino-1-(5-phospho-D-ribosyl)imidazole-4-carboxylate: step 1/2. This Pseudomonas aeruginosa (strain LESB58) protein is Phosphoribosylaminoimidazole-succinocarboxamide synthase.